The chain runs to 370 residues: Aminomethyltransferase (370 aa).

The protein belongs to the GcvT family. The glycine cleavage system is composed of four proteins: P, T, L and H.

The enzyme catalyses N(6)-[(R)-S(8)-aminomethyldihydrolipoyl]-L-lysyl-[protein] + (6S)-5,6,7,8-tetrahydrofolate = N(6)-[(R)-dihydrolipoyl]-L-lysyl-[protein] + (6R)-5,10-methylene-5,6,7,8-tetrahydrofolate + NH4(+). Functionally, the glycine cleavage system catalyzes the degradation of glycine. This is Aminomethyltransferase from Prochlorococcus marinus (strain MIT 9301).